We begin with the raw amino-acid sequence, 651 residues long: Zinc metalloproteinase nas-32 (651 aa).

The signal sequence occupies residues 1 to 21; it reads MRRFFICYIGFLSIFLDFILA. The propeptide occupies 22-202; the sequence is DKDNNSEEER…EQSSKSRRKK (181 aa). 3 N-linked (GlcNAc...) asparagine glycosylation sites follow: N25, N72, and N251. Residues 203–394 enclose the Peptidase M12A domain; it reads RQIDNLAQFW…KMLNTHYSCS (192 aa). Cystine bridges form between C245/C393, C264/C283, C395/C412, C415/C426, C434/C467, and C495/C516. Position 291 (H291) interacts with Zn(2+). The active site involves E292. Zn(2+)-binding residues include H295 and H301. The EGF-like domain maps to 380-433; it reads TFLDLKMLNTHYSCSCPTILSCGNGGFTNPANCSVCICPYGFGGALCTERTDYG. N411 carries an N-linked (GlcNAc...) asparagine glycan. The 121-residue stretch at 434–554 folds into the CUB domain; the sequence is CGSTLTATDT…TTYTWSYRYV (121 aa). N-linked (GlcNAc...) asparagine glycosylation is present at N453. N557 carries N-linked (GlcNAc...) asparagine glycosylation. 3 disulfides stabilise this stretch: C610/C647, C619/C640, and C628/C644. A ShKT domain is found at 610 to 647; that stretch reads CKDRFPKSQCSTYSTNGMCTQQPPLAAEFSCAETCGFC.

Zn(2+) serves as cofactor. As to expression, expressed in pharyngeal, anal depressor, intestinal and vulva muscles, head neurons and head mesodermal cell.

It localises to the secreted. Its function is as follows. Metalloprotease. The sequence is that of Zinc metalloproteinase nas-32 (nas-32) from Caenorhabditis elegans.